A 439-amino-acid polypeptide reads, in one-letter code: Proline--tRNA ligase (439 aa).

This sequence belongs to the class-II aminoacyl-tRNA synthetase family. ProS type 2 subfamily. In terms of assembly, homodimer.

The protein resides in the cytoplasm. It carries out the reaction tRNA(Pro) + L-proline + ATP = L-prolyl-tRNA(Pro) + AMP + diphosphate. Functionally, catalyzes the attachment of proline to tRNA(Pro) in a two-step reaction: proline is first activated by ATP to form Pro-AMP and then transferred to the acceptor end of tRNA(Pro). This Bradyrhizobium diazoefficiens (strain JCM 10833 / BCRC 13528 / IAM 13628 / NBRC 14792 / USDA 110) protein is Proline--tRNA ligase.